Here is a 399-residue protein sequence, read N- to C-terminus: Argininosuccinate synthase (399 aa).

ATP is bound by residues 8-16 (AYSGGLDTS) and alanine 35. L-citrulline is bound at residue tyrosine 87. Glycine 117 contributes to the ATP binding site. Residues threonine 119, asparagine 123, and aspartate 124 each coordinate L-aspartate. Asparagine 123 contributes to the L-citrulline binding site. 5 residues coordinate L-citrulline: arginine 127, serine 176, serine 185, glutamate 261, and tyrosine 273.

The protein belongs to the argininosuccinate synthase family. Type 1 subfamily. Homotetramer.

It is found in the cytoplasm. It catalyses the reaction L-citrulline + L-aspartate + ATP = 2-(N(omega)-L-arginino)succinate + AMP + diphosphate + H(+). Its pathway is amino-acid biosynthesis; L-arginine biosynthesis; L-arginine from L-ornithine and carbamoyl phosphate: step 2/3. This chain is Argininosuccinate synthase, found in Buchnera aphidicola subsp. Cinara cedri (strain Cc).